A 296-amino-acid chain; its full sequence is MAEITASMVKELREKTDAPMMECKKALTEAAGDLAKAEEILRVKLGSKASKAASRVTAEGIVATWQSADGKLAALVEVNCETDFVAKNDDFLAFSAAVAELVATRNPADVAAIGALDLGGQTVEQVRTALVGKIGENITIRRFTRIDAQGAVASYIHAGAKIGVLVDLVGGSEALGKDLAMHIAAAKPKALMASEIPAELIDTERRIAIEKAREAGKPEAMLDRIADGTVQKFLKEVTLLGQPFVKDDKLTIEALLKSRNASVASFVLYIVGEGIEKKVSDFAAEVAAQAAAAAQK.

Residues 82-85 (TDFV) are involved in Mg(2+) ion dislocation from EF-Tu.

Belongs to the EF-Ts family.

The protein localises to the cytoplasm. In terms of biological role, associates with the EF-Tu.GDP complex and induces the exchange of GDP to GTP. It remains bound to the aminoacyl-tRNA.EF-Tu.GTP complex up to the GTP hydrolysis stage on the ribosome. The sequence is that of Elongation factor Ts from Aromatoleum aromaticum (strain DSM 19018 / LMG 30748 / EbN1) (Azoarcus sp. (strain EbN1)).